The following is a 347-amino-acid chain: MCTKMEQPFYHDDSYAAAGYGRTPGGLSLHDYKLLKPSLALNLSDPYRNLKAPGARGPGPEGNGGGSYFSSQGSDTGASLKLASSELERLIVPNSNGVITTTPTPPGQYFYPRGGGSGGGAGGAGGGVTEEQEGFADGFVKALDDLHKMNHVTPPNVSLGASGGPPAGPGGVYAGPEPPPVYTNLSSYSPASAPSGGAGAAVGTGSSYPTATISYLPHAPPFAGGHPAQLGLGRGASAFKEEPQTVPEARSRDATPPVSPINMEDQERIKVERKRLRNRLAATKCRKRKLERIARLEDKVKTLKAENAGLSSTAGLLREQVAQLKQKVMTHVSNGCQLLLGVKGHAF.

Glycyl lysine isopeptide (Lys-Gly) (interchain with G-Cter in SUMO2) cross-links involve residues Lys4, Lys33, and Lys36. The interval 50–77 is disordered; the sequence is LKAPGARGPGPEGNGGGSYFSSQGSDTG. Gly residues predominate over residues 56 to 67; it reads RGPGPEGNGGGS. Residues 68–77 are compositionally biased toward polar residues; it reads YFSSQGSDTG. A Glycyl lysine isopeptide (Lys-Gly) (interchain with G-Cter in SUMO2) cross-link involves residue Lys81. 2 positions are modified to phosphothreonine: Thr102 and Thr104. Position 117 is a phosphoserine (Ser117). Residue Lys141 forms a Glycyl lysine isopeptide (Lys-Gly) (interchain with G-Cter in SUMO2) linkage. Lys240 is subject to N6-acetyllysine; alternate. Residue Lys240 forms a Glycyl lysine isopeptide (Lys-Gly) (interchain with G-Cter in SUMO1); alternate linkage. Lys240 participates in a covalent cross-link: Glycyl lysine isopeptide (Lys-Gly) (interchain with G-Cter in SUMO2); alternate. The span at 241–253 shows a compositional bias: basic and acidic residues; the sequence is EEPQTVPEARSRD. The disordered stretch occupies residues 241-260; sequence EEPQTVPEARSRDATPPVSP. Ser251 is modified (phosphoserine). Thr255 is subject to Phosphothreonine. The residue at position 259 (Ser259) is a Phosphoserine. Positions 268–295 are basic motif; sequence RIKVERKRLRNRLAATKCRKRKLERIAR. A bZIP domain is found at 268 to 331; that stretch reads RIKVERKRLR…AQLKQKVMTH (64 aa). The segment at 296 to 324 is leucine-zipper; sequence LEDKVKTLKAENAGLSSTAGLLREQVAQL. A Glycyl lysine isopeptide (Lys-Gly) (interchain with G-Cter in SUMO2) cross-link involves residue Lys343.

The protein belongs to the bZIP family. Jun subfamily. In terms of assembly, binds DNA as a homodimer or as a heterodimer with another member of the Jun/Fos family. Component of an AP-1 transcription factor complex composed of JUN-FOS heterodimers. As part of the AP-1 transcription factor complex, forms heterodimers with FOSB, thereby binding to the AP-1 consensus sequence and stimulating transcription. Interacts with ITCH (via its WW domains). Ubiquitinated by ITCH, leading to its degradation.

The protein resides in the nucleus. Transcription factor involved in regulating gene activity following the primary growth factor response. Binds to the DNA sequence 5'-TGA[GC]TCA-3'. Heterodimerizes with proteins of the FOS family to form an AP-1 transcription complex, thereby enhancing its DNA binding activity to an AP-1 consensus sequence and its transcriptional activity. The chain is Transcription factor JunB (JUNB) from Bos taurus (Bovine).